The primary structure comprises 241 residues: U2 small nuclear ribonucleoprotein B'' (241 aa).

The region spanning 12 to 91 (QTLYVNNLYE…RPMKIQYCKS (80 aa)) is the RRM 1 domain. Residues 99-126 (LDGTYMEKKREREENDKKGSNKKQDRKS) are compositionally biased toward basic and acidic residues. Residues 99-169 (LDGTYMEKKR…PRDDPPNKTL (71 aa)) form a disordered region. Low complexity predominate over residues 129-152 (QQQQQQKRPGAPTSTTSTTSPTTS). The RRM 2 domain maps to 167-241 (KTLFVENLPD…KPMVVSFAAQ (75 aa)).

This sequence belongs to the RRM U1 A/B'' family. As to quaternary structure, identified in the spliceosome B complex. Identified in the spliceosome C complex.

The protein localises to the nucleus. Functionally, involved in pre-mRNA splicing as component of the spliceosome. Associated with sn-RNP U2, where it contributes to the binding of stem loop IV of U2 snRNA. The polypeptide is U2 small nuclear ribonucleoprotein B'' (snrpb2) (Dictyostelium discoideum (Social amoeba)).